Consider the following 89-residue polypeptide: Small ribosomal subunit protein uS15 (89 aa).

The protein belongs to the universal ribosomal protein uS15 family. In terms of assembly, part of the 30S ribosomal subunit. Forms a bridge to the 50S subunit in the 70S ribosome, contacting the 23S rRNA.

Its function is as follows. One of the primary rRNA binding proteins, it binds directly to 16S rRNA where it helps nucleate assembly of the platform of the 30S subunit by binding and bridging several RNA helices of the 16S rRNA. Forms an intersubunit bridge (bridge B4) with the 23S rRNA of the 50S subunit in the ribosome. The chain is Small ribosomal subunit protein uS15 from Rippkaea orientalis (strain PCC 8801 / RF-1) (Cyanothece sp. (strain PCC 8801)).